Reading from the N-terminus, the 385-residue chain is MAAVVAATALKGRGARNARVLRGILSGATANKASQNRTRALQSHSSPECKEEPEPLSPELEYIPRKRGKNPMKAVGLAWYSLYTRTWLGYLFYRQQLRRARNRYPKGHSKTQPRLFNGVKVLPIPVLSDNYSYLIIDTQAGLAVAVDPSDPRAVQASIEKERVNLVAILCTHKHWDHSGGNRDLSRRHRDCRVYGSPQDGIPYLTHPLCHQDVVSVGRLQIRALATPGHTQGHLVYLLDGEPYKGPSCLFSGDLLFLSGCGRTFEGTAETMLSSLDTVLDLGDDTLLWPGHEYAEENLGFAGVVEPENLARERKMQWVQRQRMERKSTCPSTLGEERAYNPFLRTHCLELQEALGPGPGPTSDDGCSRAQLLEELRRLKDMHKSK.

The span at 32 to 42 (KASQNRTRALQ) shows a compositional bias: polar residues. The tract at residues 32 to 56 (KASQNRTRALQSHSSPECKEEPEPL) is disordered. The residue at position 121 (Val-121) is a Phosphoserine. The Zn(2+) site is built by His-172, His-174, Asp-176, His-177, His-229, Asp-253, and His-291.

This sequence belongs to the metallo-beta-lactamase superfamily. Glyoxalase II family. In terms of assembly, isoform 2 interacts with the sarcomeric proteins, MRLC2, MYOM1 and ENO3. Zn(2+) serves as cofactor. In terms of processing, undergoes cleavage at the N-terminus. In terms of tissue distribution, expressed in many discrete areas of the brain.

The protein resides in the cell membrane. Its subcellular location is the mitochondrion. The protein localises to the cytoplasm. It catalyses the reaction a thioester + H2O = a thiol + a carboxylate + H(+). Probable thioesterase that may play a role in cellular detoxification processes; it likely acts on a yet-unknown alpha-hydroxythioester substrate. In vitro, it is able to catalyze the hydrolysis of S-D-lactoyl-glutathione to form glutathione and D-lactic acid at very low rate, though this reaction is not physiologically relevant in vivo. The chain is Probable thioesterase PNKD (Pnkd) from Mus musculus (Mouse).